The following is a 446-amino-acid chain: Lysine histidine transporter 1 (446 aa).

The Cytoplasmic portion of the chain corresponds to 1-37 (MVAQAPHDDHQDDEKLAAARQKEIEDWLPITSSRNAK). The chain crosses the membrane as a helical span at residues 38–58 (WWYSAFHNVTAMVGAGVLGLP). At 59 to 63 (YAMSQ) the chain is on the extracellular side. Residues 64–84 (LGWGPGIAVLVLSWVITLYTL) form a helical membrane-spanning segment. Over 85 to 115 (WQMVEMHEMVPGKRFDRYHELGQHAFGEKLG) the chain is Cytoplasmic. The helical transmembrane segment at 116–136 (LYIVVPQQLIVEIGVCIVYMV) threads the bilayer. Topologically, residues 137–157 (TGGKSLKKFHELVCDDCKPIK) are extracellular. The helical transmembrane segment at 158–178 (LTYFIMIFASVHFVLSHLPNF) threads the bilayer. Topologically, residues 179–180 (NS) are cytoplasmic. A helical membrane pass occupies residues 181 to 201 (ISGVSLAAAVMSLSYSTIAWA). The Extracellular portion of the chain corresponds to 202-227 (SSASKGVQEDVQYGYKAKTTAGTVFN). The chain crosses the membrane as a helical span at residues 228-248 (FFSGLGDVAFAYAGHNVVLEI). Topologically, residues 249–268 (QATIPSTPEKPSKGPMWRGV) are cytoplasmic. The chain crosses the membrane as a helical span at residues 269–289 (IVAYIVVALCYFPVALVGYYI). Topologically, residues 290 to 305 (FGNGVEDNILMSLKKP) are extracellular. The helical transmembrane segment at 306–326 (AWLIATANIFVVIHVIGSYQI) threads the bilayer. Residues 327-352 (YAMPVFDMMETLLVKKLNFRPTTTLR) are Cytoplasmic-facing. The helical transmembrane segment at 353–375 (FFVRNFYVAATMFVGMTFPFFGG) threads the bilayer. The Extracellular segment spans residues 376–378 (LLA). The helical transmembrane segment at 379–401 (FFGGFAFAPTTYFLPCVIWLAIY) threads the bilayer. Residues 402-409 (KPKKYSLS) are Cytoplasmic-facing. The chain crosses the membrane as a helical span at residues 410 to 430 (WWANWVCIVFGLFLMVLSPIG). Residues 431 to 446 (GLRTIVIQAKGYKFYS) are Extracellular-facing.

The protein belongs to the amino acid/polyamine transporter 2 family. Amino acid/auxin permease (AAAP) (TC 2.A.18.2) subfamily. As to expression, expressed in roots, stems, flowers, leaves, siliques and pollen. Found in the tips of roots and in the rhizodermis of emerging roots and in lateral roots. Higher expression in older leaves as compared to joung leaves. Detected first at the hydathodes, then in the epidermis and finally in matures leaves in all mesophyll cells. Not detected in vascular bundles or in seeds.

It is found in the cell membrane. Its activity is regulated as follows. Inhibited by carbonlycyanide m-chlorophenylhydrazone (CCCP) and DEPC. In terms of biological role, amino acid-proton symporter. Transporter with a broad specificity for histidine, lysine, glutamic acid, alanine, serine, proline and glycine. Involved in both apoplastic transport of amino acids in leaves and their uptake by roots. The polypeptide is Lysine histidine transporter 1 (LHT1) (Arabidopsis thaliana (Mouse-ear cress)).